A 311-amino-acid chain; its full sequence is DNA-directed RNA polymerase subunit alpha (311 aa).

The segment at 1-227 (MAQFQIECVE…NLFCSLRNLD (227 aa)) is alpha N-terminal domain (alpha-NTD). Residues 242–311 (ISQVLIEELQ…GISLPKEKTD (70 aa)) form an alpha C-terminal domain (alpha-CTD) region.

This sequence belongs to the RNA polymerase alpha chain family. In terms of assembly, in plastids the minimal PEP RNA polymerase catalytic core is composed of four subunits: alpha, beta, beta', and beta''. When a (nuclear-encoded) sigma factor is associated with the core the holoenzyme is formed, which can initiate transcription.

The protein localises to the plastid. It is found in the chloroplast. The catalysed reaction is RNA(n) + a ribonucleoside 5'-triphosphate = RNA(n+1) + diphosphate. In terms of biological role, DNA-dependent RNA polymerase catalyzes the transcription of DNA into RNA using the four ribonucleoside triphosphates as substrates. This is DNA-directed RNA polymerase subunit alpha from Porphyra purpurea (Red seaweed).